Consider the following 212-residue polypeptide: Thymidylate kinase (212 aa).

11-18 (GPEGAGKT) provides a ligand contact to ATP.

This sequence belongs to the thymidylate kinase family.

The catalysed reaction is dTMP + ATP = dTDP + ADP. Its function is as follows. Phosphorylation of dTMP to form dTDP in both de novo and salvage pathways of dTTP synthesis. The polypeptide is Thymidylate kinase (Streptococcus pneumoniae (strain Hungary19A-6)).